The following is a 115-amino-acid chain: Hydrogenase maturation factor HypA (115 aa).

Residue H2 coordinates Ni(2+). The Zn(2+) site is built by C73, C76, C89, and C92.

The protein belongs to the HypA/HybF family.

Its function is as follows. Involved in the maturation of [NiFe] hydrogenases. Required for nickel insertion into the metal center of the hydrogenase. The protein is Hydrogenase maturation factor HypA of Polaromonas naphthalenivorans (strain CJ2).